Here is a 120-residue protein sequence, read N- to C-terminus: UPF0231 protein YacL (120 aa).

The protein belongs to the UPF0231 family.

The protein is UPF0231 protein YacL of Salmonella heidelberg (strain SL476).